Reading from the N-terminus, the 477-residue chain is Shikimate biosynthesis protein AroDE (477 aa).

The segment at 1-209 (MLCATVSGPS…LEELLSYNYS (209 aa)) is 3-dehydroquinate dehydratase. Residues serine 21, 29–31 (ELR), and 56–58 (TFR) contribute to the 3-dehydroquinate site. Residue histidine 111 is the Proton donor/acceptor; for 3-dehydroquinate dehydratase activity of the active site. Catalysis depends on lysine 134, which acts as the Schiff-base intermediate with substrate; for 3-dehydroquinate dehydratase activity. Residues arginine 172 and glutamine 197 each coordinate 3-dehydroquinate. Residues 210 to 477 (KLSEKSHIYG…NYVKNFMAKV (268 aa)) form a shikimate 5-dehydrogenase region. A shikimate-binding site is contributed by 228-230 (SIS). Lysine 279 serves as the catalytic Proton acceptor; for shikimate dehydrogenase activity. Shikimate-binding residues include asparagine 300 and aspartate 315. NADP(+) is bound by residues 339 to 343 (GAGGA), 362 to 364 (NRT), and glycine 438. Position 445 (glutamine 445) interacts with shikimate.

The protein in the N-terminal section; belongs to the type-I 3-dehydroquinase family. It in the C-terminal section; belongs to the shikimate dehydrogenase family.

The enzyme catalyses 3-dehydroquinate = 3-dehydroshikimate + H2O. The catalysed reaction is shikimate + NADP(+) = 3-dehydroshikimate + NADPH + H(+). Its pathway is metabolic intermediate biosynthesis; chorismate biosynthesis; chorismate from D-erythrose 4-phosphate and phosphoenolpyruvate: step 3/7. The protein operates within metabolic intermediate biosynthesis; chorismate biosynthesis; chorismate from D-erythrose 4-phosphate and phosphoenolpyruvate: step 4/7. Its function is as follows. Bifunctional enzyme that catalyzes two sequential steps of the aromatic amino acids biosynthetic pathway. In the first reaction, the AroD domain catalyzes the cis-dehydration of 3-dehydroquinate (DHQ) and introduces the first double bond of the aromatic ring to yield 3-dehydroshikimate; in the second reaction, the AroE domain catalyzes the reversible NADPH linked reduction of 3-dehydroshikimate (DHSA) to yield shikimate (SA). The protein is Shikimate biosynthesis protein AroDE of Chlamydia pneumoniae (Chlamydophila pneumoniae).